We begin with the raw amino-acid sequence, 193 residues long: Ribosomal RNA small subunit methyltransferase G (193 aa).

S-adenosyl-L-methionine contacts are provided by residues Gly-61, Leu-66, 112–113 (IE), and Arg-126.

It belongs to the methyltransferase superfamily. RNA methyltransferase RsmG family.

Its subcellular location is the cytoplasm. The enzyme catalyses guanosine(527) in 16S rRNA + S-adenosyl-L-methionine = N(7)-methylguanosine(527) in 16S rRNA + S-adenosyl-L-homocysteine. In terms of biological role, specifically methylates the N7 position of guanine in position 527 of 16S rRNA. The protein is Ribosomal RNA small subunit methyltransferase G of Paracoccus denitrificans (strain Pd 1222).